Reading from the N-terminus, the 265-residue chain is Keratinocyte-associated transmembrane protein 2 (265 aa).

The signal sequence occupies residues 1 to 49 (MAAAALKRMRGPAQAKLLPGSAIQALVGLARPLVLALLLVSAALSSVVS). At 50–196 (RTDSPSPTVL…MPSSNIEEED (147 aa)) the chain is on the extracellular side. The segment covering 72-96 (THENQTKPSISQISTTLPPTMSTEK) has biased composition (polar residues). Disordered regions lie at residues 72–123 (THEN…EDPS) and 135–168 (SPST…SDDT). An N-linked (GlcNAc...) asparagine glycan is attached at N75. The span at 114-123 (EEADNNEDPS) shows a compositional bias: acidic residues. The chain crosses the membrane as a helical span at residues 197–217 (SHFFFHLIIFAFCIAVVYITY). Over 218 to 265 (HNKRKIFLLVQSRKWRDGLCSKTVEYHRLDQNVNEAMPSLKITNDYTF) the chain is Cytoplasmic. A phosphoserine mark is found at S229 and S256.

It localises to the membrane. The chain is Keratinocyte-associated transmembrane protein 2 (KCT2) from Pongo abelii (Sumatran orangutan).